Here is a 644-residue protein sequence, read N- to C-terminus: Methionine--tRNA ligase (644 aa).

The 'HIGH' region motif lies at 14 to 24 (YYPSAKLHIGN). Positions 129, 132, 146, and 149 each coordinate Zn(2+). The 'KMSKS' region signature appears at 299–303 (KMSKS). Lys302 is a binding site for ATP. The tRNA-binding domain occupies 542–644 (DVDKLDLRVV…EDIPTGSIVR (103 aa)).

It belongs to the class-I aminoacyl-tRNA synthetase family. MetG type 2A subfamily. In terms of assembly, homodimer. Zn(2+) is required as a cofactor.

Its subcellular location is the cytoplasm. It carries out the reaction tRNA(Met) + L-methionine + ATP = L-methionyl-tRNA(Met) + AMP + diphosphate. In terms of biological role, is required not only for elongation of protein synthesis but also for the initiation of all mRNA translation through initiator tRNA(fMet) aminoacylation. This Clostridium acetobutylicum (strain ATCC 824 / DSM 792 / JCM 1419 / IAM 19013 / LMG 5710 / NBRC 13948 / NRRL B-527 / VKM B-1787 / 2291 / W) protein is Methionine--tRNA ligase (metG).